The primary structure comprises 367 residues: Alanine racemase (367 aa).

K40 serves as the catalytic Proton acceptor; specific for D-alanine. K40 is modified (N6-(pyridoxal phosphate)lysine). Substrate is bound at residue R136. Y263 serves as the catalytic Proton acceptor; specific for L-alanine. M310 contacts substrate.

This sequence belongs to the alanine racemase family. The cofactor is pyridoxal 5'-phosphate.

The catalysed reaction is L-alanine = D-alanine. It participates in amino-acid biosynthesis; D-alanine biosynthesis; D-alanine from L-alanine: step 1/1. Its function is as follows. Catalyzes the interconversion of L-alanine and D-alanine. May also act on other amino acids. This is Alanine racemase (alr) from Streptococcus pneumoniae (strain ATCC 700669 / Spain 23F-1).